The following is a 236-amino-acid chain: Small ribosomal subunit protein uS3 (236 aa).

A KH type-2 domain is found at 39-107 (VRHFLMQKLS…PTQLNIAEVR (69 aa)).

It belongs to the universal ribosomal protein uS3 family. Part of the 30S ribosomal subunit. Forms a tight complex with proteins S10 and S14.

Binds the lower part of the 30S subunit head. Binds mRNA in the 70S ribosome, positioning it for translation. The polypeptide is Small ribosomal subunit protein uS3 (Blochmanniella pennsylvanica (strain BPEN)).